The sequence spans 36 residues: Pancreatic polypeptide (36 aa).

Position 36 is a phenylalanine amide (Phe36).

It belongs to the NPY family.

The protein resides in the secreted. Hormone secreted by pancreatic cells that acts as a regulator of pancreatic and gastrointestinal functions. In Rana temporaria (European common frog), this protein is Pancreatic polypeptide (ppy).